Here is a 190-residue protein sequence, read N- to C-terminus: Threonylcarbamoyl-AMP synthase (190 aa).

Residues 10–190 (PQDKESVYRH…DWHSRQVIRA (181 aa)) form the YrdC-like domain.

This sequence belongs to the SUA5 family. TsaC subfamily.

It localises to the cytoplasm. The enzyme catalyses L-threonine + hydrogencarbonate + ATP = L-threonylcarbamoyladenylate + diphosphate + H2O. Its function is as follows. Required for the formation of a threonylcarbamoyl group on adenosine at position 37 (t(6)A37) in tRNAs that read codons beginning with adenine. Catalyzes the conversion of L-threonine, HCO(3)(-)/CO(2) and ATP to give threonylcarbamoyl-AMP (TC-AMP) as the acyladenylate intermediate, with the release of diphosphate. In Dichelobacter nodosus (strain VCS1703A), this protein is Threonylcarbamoyl-AMP synthase.